The primary structure comprises 152 residues: Transcriptional regulator MraZ (152 aa).

2 consecutive SpoVT-AbrB domains span residues 5–51 (VNSI…PLPE) and 80–123 (AAEC…DEVL).

This sequence belongs to the MraZ family. As to quaternary structure, forms oligomers.

The protein resides in the cytoplasm. Its subcellular location is the nucleoid. The polypeptide is Transcriptional regulator MraZ (Methylococcus capsulatus (strain ATCC 33009 / NCIMB 11132 / Bath)).